The chain runs to 935 residues: uncharacterized protein (935 aa).

9 disordered regions span residues 1–32 (MDIG…QNNN), 74–228 (NNNN…YNNG), 265–287 (NNEN…NNNN), 342–376 (NQQK…SSKT), 394–414 (SPTQ…QQQY), 466–491 (KNIN…NNNI), 516–559 (PHQQ…TSTI), 727–755 (SPSS…ISPS), and 778–799 (GGGS…NVQN). Positions 74 to 227 (NNNNNTTNNN…NNNDDNIYNN (154 aa)) are enriched in low complexity. Residues 262-331 (KKNNNENKKK…NNINNNNNKI (70 aa)) adopt a coiled-coil conformation. Positions 265–274 (NNENKKKNND) are enriched in basic and acidic residues. Low complexity predominate over residues 275-287 (NENNNYPNFNNNN). A compositionally biased stretch (polar residues) spans 367-376 (LSHNSESSKT). Positions 397–414 (QQQQQQQQQQQQQQQQQY) are enriched in low complexity. Low complexity predominate over residues 522–559 (SSPTSSSTSTSSTTSSSSSSSSSSSSSSSSSTSSTSTI). Gly residues predominate over residues 778-791 (GGGSSGGGGSGGGV).

This is an uncharacterized protein from Dictyostelium discoideum (Social amoeba).